Here is a 436-residue protein sequence, read N- to C-terminus: Methylenetetrahydrofolate--tRNA-(uracil-5-)-methyltransferase TrmFO (436 aa).

Residue 9–14 (GAGLAG) participates in FAD binding.

It belongs to the MnmG family. TrmFO subfamily. Requires FAD as cofactor.

The protein localises to the cytoplasm. The catalysed reaction is uridine(54) in tRNA + (6R)-5,10-methylene-5,6,7,8-tetrahydrofolate + NADH + H(+) = 5-methyluridine(54) in tRNA + (6S)-5,6,7,8-tetrahydrofolate + NAD(+). It carries out the reaction uridine(54) in tRNA + (6R)-5,10-methylene-5,6,7,8-tetrahydrofolate + NADPH + H(+) = 5-methyluridine(54) in tRNA + (6S)-5,6,7,8-tetrahydrofolate + NADP(+). Functionally, catalyzes the folate-dependent formation of 5-methyl-uridine at position 54 (M-5-U54) in all tRNAs. In Acetivibrio thermocellus (strain ATCC 27405 / DSM 1237 / JCM 9322 / NBRC 103400 / NCIMB 10682 / NRRL B-4536 / VPI 7372) (Clostridium thermocellum), this protein is Methylenetetrahydrofolate--tRNA-(uracil-5-)-methyltransferase TrmFO.